A 667-amino-acid polypeptide reads, in one-letter code: DNA ligase (667 aa).

Residues 34-38, 83-84, and glutamate 112 each bind NAD(+); these read DSEYD and SL. The active-site N6-AMP-lysine intermediate is the lysine 114. The NAD(+) site is built by arginine 135, glutamate 169, lysine 285, and lysine 309. Zn(2+) is bound by residues cysteine 403, cysteine 406, cysteine 421, and cysteine 426. Residues 589-667 enclose the BRCT domain; that stretch reads ASDSYFAGKT…EARLISELKK (79 aa).

Belongs to the NAD-dependent DNA ligase family. LigA subfamily. The cofactor is Mg(2+). It depends on Mn(2+) as a cofactor.

The catalysed reaction is NAD(+) + (deoxyribonucleotide)n-3'-hydroxyl + 5'-phospho-(deoxyribonucleotide)m = (deoxyribonucleotide)n+m + AMP + beta-nicotinamide D-nucleotide.. DNA ligase that catalyzes the formation of phosphodiester linkages between 5'-phosphoryl and 3'-hydroxyl groups in double-stranded DNA using NAD as a coenzyme and as the energy source for the reaction. It is essential for DNA replication and repair of damaged DNA. In Bacillus licheniformis (strain ATCC 14580 / DSM 13 / JCM 2505 / CCUG 7422 / NBRC 12200 / NCIMB 9375 / NCTC 10341 / NRRL NRS-1264 / Gibson 46), this protein is DNA ligase.